A 496-amino-acid chain; its full sequence is Glutamyl-tRNA(Gln) amidotransferase subunit A (496 aa).

Residues K79 and S159 each act as charge relay system in the active site. S183 (acyl-ester intermediate) is an active-site residue.

It belongs to the amidase family. GatA subfamily. As to quaternary structure, heterotrimer of A, B and C subunits.

It carries out the reaction L-glutamyl-tRNA(Gln) + L-glutamine + ATP + H2O = L-glutaminyl-tRNA(Gln) + L-glutamate + ADP + phosphate + H(+). Its function is as follows. Allows the formation of correctly charged Gln-tRNA(Gln) through the transamidation of misacylated Glu-tRNA(Gln) in organisms which lack glutaminyl-tRNA synthetase. The reaction takes place in the presence of glutamine and ATP through an activated gamma-phospho-Glu-tRNA(Gln). The sequence is that of Glutamyl-tRNA(Gln) amidotransferase subunit A from Ruegeria pomeroyi (strain ATCC 700808 / DSM 15171 / DSS-3) (Silicibacter pomeroyi).